Reading from the N-terminus, the 1085-residue chain is DNA mismatch repair protein MutS (1085 aa).

The interval 533 to 564 is disordered; the sequence is DEDLFGEEEQNAPPVGSSNHAVGTQPSADDEA. The segment covering 548–559 has biased composition (polar residues); that stretch reads GSSNHAVGTQPS. 812–819 serves as a coordination point for ATP; that stretch reads GPNMSGKS. The interval 997-1042 is disordered; that stretch reads ERRAPRSAPPTVPARGDDRRSAGRASSSGAGAARGEQGRTLPDGQL. A compositionally biased stretch (low complexity) spans 1019–1031; it reads GRASSSGAGAARG.

It belongs to the DNA mismatch repair MutS family.

Its function is as follows. This protein is involved in the repair of mismatches in DNA. It is possible that it carries out the mismatch recognition step. This protein has a weak ATPase activity. This is DNA mismatch repair protein MutS from Roseiflexus sp. (strain RS-1).